A 229-amino-acid chain; its full sequence is UPF0173 metal-dependent hydrolase SSP1060 (229 aa).

It belongs to the UPF0173 family.

The sequence is that of UPF0173 metal-dependent hydrolase SSP1060 from Staphylococcus saprophyticus subsp. saprophyticus (strain ATCC 15305 / DSM 20229 / NCIMB 8711 / NCTC 7292 / S-41).